Reading from the N-terminus, the 512-residue chain is N-acetyltryptophan 6-hydroxylase ivoC (512 aa).

The chain crosses the membrane as a helical span at residues 6-26 (LVFSFPAWALLLVLTLLYTLY). N-linked (GlcNAc...) asparagine glycosylation occurs at Asn-118. Cys-453 is a binding site for heme.

It belongs to the cytochrome P450 family. Requires heme as cofactor.

The protein resides in the membrane. The protein operates within pigment biosynthesis. Its function is as follows. N-acetyltryptophan 6-hydroxylase; part of the pathway that mediates the biosynthesis of the gray-brown conidiophore pigment. The first step of the pathway is performed by the nonribosomal peptide synthetase ivoA that catalyzes ATP-dependent unidirectional stereoinversion of L-tryptophan to D-tryptophan with complete conversion. While the stereoinversion is catalyzed by the epimerization (E) domain of ivoA, the terminal condensation (C) domain stereoselectively hydrolyzes D-tryptophanyl-S-phosphopantetheine thioester and thus represents a non-canonical C domain function. D-tryptophan is acetylated, probably by an endogenous acetyltransferase. N-acetyltryptophan is further 6-hydroxylated into N-acetyl-6-hydroxytryptophan (AHT) by the cytochrome P450 monooxygenase ivoC. N-acetyl-6-hydroxytryptophan is substrate of the N-acetyl-6-hydroxytryptophan oxidase ivoB to produce the gray-brown conidiophore pigment. This Emericella nidulans (strain FGSC A4 / ATCC 38163 / CBS 112.46 / NRRL 194 / M139) (Aspergillus nidulans) protein is N-acetyltryptophan 6-hydroxylase ivoC.